Consider the following 296-residue polypeptide: Protease HtpX homolog (296 aa).

The next 2 membrane-spanning stretches (helical) occupy residues 14 to 34 and 39 to 59; these read VVLLIVFFCLLAAIGAAVGYL and YQFGLVLALIIGVIYAVSMIF. His143 is a Zn(2+) binding site. Glu144 is an active-site residue. His147 contributes to the Zn(2+) binding site. 2 consecutive transmembrane segments (helical) span residues 158–178 and 195–215; these read IAVALASAVTLISSIGSRMLF and ILVLIFSILSLILAPLAASLV. Glu224 provides a ligand contact to Zn(2+).

Belongs to the peptidase M48B family. Zn(2+) is required as a cofactor.

It localises to the cell membrane. The chain is Protease HtpX homolog from Streptococcus agalactiae serotype III (strain NEM316).